A 587-amino-acid polypeptide reads, in one-letter code: ATP-dependent lipid A-core flippase (587 aa).

The next 5 helical transmembrane spans lie at leucine 31 to leucine 51, leucine 68 to isoleucine 88, glycine 145 to phenylalanine 165, tyrosine 166 to isoleucine 186, and valine 259 to isoleucine 279. The ABC transmembrane type-1 domain occupies isoleucine 32–serine 315. In terms of domain architecture, ABC transporter spans leucine 347 to methionine 583. Glycine 381–serine 388 serves as a coordination point for ATP.

It belongs to the ABC transporter superfamily. Lipid exporter (TC 3.A.1.106) family. In terms of assembly, homodimer.

It localises to the cell inner membrane. It carries out the reaction ATP + H2O + lipid A-core oligosaccharideSide 1 = ADP + phosphate + lipid A-core oligosaccharideSide 2.. In terms of biological role, involved in lipopolysaccharide (LPS) biosynthesis. Translocates lipid A-core from the inner to the outer leaflet of the inner membrane. Transmembrane domains (TMD) form a pore in the inner membrane and the ATP-binding domain (NBD) is responsible for energy generation. This chain is ATP-dependent lipid A-core flippase, found in Haemophilus influenzae (strain ATCC 51907 / DSM 11121 / KW20 / Rd).